The sequence spans 342 residues: Probable tyrosine--tRNA ligase, cytoplasmic (342 aa).

Tyr48 provides a ligand contact to L-tyrosine. Positions 53-61 (ITGKPHIGY) match the 'HIGH' region motif. Positions 175, 179, 182, and 197 each coordinate L-tyrosine. The 'KMSKS' region signature appears at 231 to 235 (KMSSS).

Belongs to the class-I aminoacyl-tRNA synthetase family. As to quaternary structure, homodimer.

The protein resides in the cytoplasm. It catalyses the reaction tRNA(Tyr) + L-tyrosine + ATP = L-tyrosyl-tRNA(Tyr) + AMP + diphosphate + H(+). The sequence is that of Probable tyrosine--tRNA ligase, cytoplasmic from Enterocytozoon bieneusi (strain H348) (Microsporidian parasite).